A 417-amino-acid chain; its full sequence is Serine hydroxymethyltransferase 1 (417 aa).

Residues Leu-121 and 125-127 contribute to the (6S)-5,6,7,8-tetrahydrofolate site; that span reads GHL. Position 229 is an N6-(pyridoxal phosphate)lysine (Lys-229). 355-357 serves as a coordination point for (6S)-5,6,7,8-tetrahydrofolate; sequence SPF.

Belongs to the SHMT family. As to quaternary structure, homodimer. Requires pyridoxal 5'-phosphate as cofactor.

Its subcellular location is the cytoplasm. The enzyme catalyses (6R)-5,10-methylene-5,6,7,8-tetrahydrofolate + glycine + H2O = (6S)-5,6,7,8-tetrahydrofolate + L-serine. The protein operates within one-carbon metabolism; tetrahydrofolate interconversion. Its pathway is amino-acid biosynthesis; glycine biosynthesis; glycine from L-serine: step 1/1. Its function is as follows. Catalyzes the reversible interconversion of serine and glycine with tetrahydrofolate (THF) serving as the one-carbon carrier. This reaction serves as the major source of one-carbon groups required for the biosynthesis of purines, thymidylate, methionine, and other important biomolecules. Also exhibits THF-independent aldolase activity toward beta-hydroxyamino acids, producing glycine and aldehydes, via a retro-aldol mechanism. The protein is Serine hydroxymethyltransferase 1 of Pectobacterium atrosepticum (strain SCRI 1043 / ATCC BAA-672) (Erwinia carotovora subsp. atroseptica).